The primary structure comprises 529 residues: UDP-glucuronosyltransferase 2B23 (529 aa).

An N-terminal signal peptide occupies residues M1–G24. N67 and N68 each carry an N-linked (GlcNAc...) asparagine glycan. Residues I494–F514 form a helical membrane-spanning segment.

It belongs to the UDP-glycosyltransferase family. Expressed in several tissues, including the prostate, mammary gland, epididymis, testis and ovary.

It is found in the microsome membrane. The protein localises to the endoplasmic reticulum membrane. The enzyme catalyses glucuronate acceptor + UDP-alpha-D-glucuronate = acceptor beta-D-glucuronoside + UDP + H(+). Its function is as follows. UDPGTs are of major importance in the conjugation and subsequent elimination of potentially toxic xenobiotics and endogenous compounds. This isozyme has glucuronidating capacity on 6 steroids and the bile acid, hyodeoxycholic acid. May potentially play an important role in estrogen and androgen catabolism in peripheral steroid target tissues. In Macaca fascicularis (Crab-eating macaque), this protein is UDP-glucuronosyltransferase 2B23 (UGT2B23).